Here is a 396-residue protein sequence, read N- to C-terminus: 3-amino-4-hydroxybenzoic acid synthase (396 aa).

Positions 1–29 (MSSSPSPSPSSSSSSSASSSASSSPSSSS) are disordered.

This sequence belongs to the archaeal-type DHQ synthase family. GriH subfamily. As to quaternary structure, monomer. Requires Mn(2+) as cofactor.

The enzyme catalyses 2-amino-4,5-dihydroxy-6-oxo-7-(phosphooxy)heptanoate = 3-amino-4-hydroxybenzoate + phosphate + 2 H2O + H(+). Functionally, catalyzes the cyclization of 2-amino-4,5-dihydroxy-6-one-heptanoic acid-7-phosphate to yield 3-amino-4-hydroxybenzoic acid (3,4-AHBA). This is 3-amino-4-hydroxybenzoic acid synthase (griH) from Streptomyces griseus subsp. griseus (strain JCM 4626 / CBS 651.72 / NBRC 13350 / KCC S-0626 / ISP 5235).